A 774-amino-acid chain; its full sequence is Formin-like protein 13 (774 aa).

The signal sequence occupies residues 1–22 (MRRRVALSTAIALLVGAQLCVA). Positions 51 to 67 (PPPPMSGSEAVPPPPPA) are enriched in pro residues. The segment at 51–78 (PPPPMSGSEAVPPPPPAAAASATTGGGR) is disordered. The segment covering 68–78 (AAASATTGGGR) has biased composition (low complexity). The chain crosses the membrane as a helical span at residues 89-109 (IALSAGLVALAVASYSCCLLL). 4 disordered regions span residues 130 to 163 (AAAAVAARVPSDVGSSSRQHRSPPPSSTASDAIY), 176 to 338 (HEKS…HLKP), 374 to 402 (FLNSGGGGAGSSDPAARRGGSGKQERRLL), and 740 to 774 (GSGKSFRVPAGTSLPPHRNENRRVLSSSDEDSSSS). Pro residues predominate over residues 194 to 216 (DLRPLPPLKRPESQPPPPPPSTP). The segment covering 242–261 (SSFSRSTSQHSTLEQTAMPP) has biased composition (low complexity). A compositionally biased stretch (pro residues) spans 262-286 (MAAPAPPQTNPPRPVRPPPPPPPPR). The FH2 domain maps to 326 to 749 (GAARPPKPPH…GSGKSFRVPA (424 aa)).

It belongs to the formin-like family. Class-I subfamily.

It is found in the membrane. The sequence is that of Formin-like protein 13 (FH13) from Oryza sativa subsp. japonica (Rice).